The primary structure comprises 425 residues: Multifunctional CCA protein (425 aa).

ATP-binding residues include Gly-8 and Arg-11. The CTP site is built by Gly-8 and Arg-11. The Mg(2+) site is built by Asp-21 and Asp-23. Positions 91, 141, and 144 each coordinate ATP. Positions 91, 141, and 144 each coordinate CTP. The region spanning 230–331 is the HD domain; sequence TGVHLMMVLD…VRLLERCDAI (102 aa).

The protein belongs to the tRNA nucleotidyltransferase/poly(A) polymerase family. Bacterial CCA-adding enzyme type 1 subfamily. Monomer. Can also form homodimers and oligomers. Requires Mg(2+) as cofactor. Ni(2+) serves as cofactor.

It carries out the reaction a tRNA precursor + 2 CTP + ATP = a tRNA with a 3' CCA end + 3 diphosphate. The enzyme catalyses a tRNA with a 3' CCA end + 2 CTP + ATP = a tRNA with a 3' CCACCA end + 3 diphosphate. Functionally, catalyzes the addition and repair of the essential 3'-terminal CCA sequence in tRNAs without using a nucleic acid template. Adds these three nucleotides in the order of C, C, and A to the tRNA nucleotide-73, using CTP and ATP as substrates and producing inorganic pyrophosphate. tRNA 3'-terminal CCA addition is required both for tRNA processing and repair. Also involved in tRNA surveillance by mediating tandem CCA addition to generate a CCACCA at the 3' terminus of unstable tRNAs. While stable tRNAs receive only 3'-terminal CCA, unstable tRNAs are marked with CCACCA and rapidly degraded. This is Multifunctional CCA protein from Acidovorax ebreus (strain TPSY) (Diaphorobacter sp. (strain TPSY)).